A 548-amino-acid polypeptide reads, in one-letter code: Protein NRT1/ PTR FAMILY 2.4 (548 aa).

Helical transmembrane passes span 29 to 49 (TLLG…VFLI), 65 to 85 (IVNG…DSFF), 88 to 108 (IPVI…LTLI), 136 to 156 (ILYA…FILA), 172 to 192 (FFNW…TAIV), 200 to 220 (WKLG…IFVA), 316 to 336 (LVPL…QMSM), 354 to 374 (VSAG…IILN), 393 to 413 (LQKV…SAVV), 429 to 449 (VLWL…HFPA), 468 to 488 (SLTS…IDVI), and 508 to 528 (YLVL…CSWF).

Belongs to the major facilitator superfamily. Proton-dependent oligopeptide transporter (POT/PTR) (TC 2.A.17) family. As to expression, strongly expressed in the root stele.

Its subcellular location is the membrane. Its function is as follows. Transporter involved in a passive nitrate efflux. The protein is Protein NRT1/ PTR FAMILY 2.4 (NPF2.4) of Arabidopsis thaliana (Mouse-ear cress).